Reading from the N-terminus, the 186-residue chain is dCTP deaminase (186 aa).

107–112 (KSTYAR) contributes to the dCTP binding site. E133 functions as the Proton donor/acceptor in the catalytic mechanism. 3 residues coordinate dCTP: Q152, Y166, and Q176.

It belongs to the dCTP deaminase family. Homotrimer.

It catalyses the reaction dCTP + H2O + H(+) = dUTP + NH4(+). It participates in pyrimidine metabolism; dUMP biosynthesis; dUMP from dCTP (dUTP route): step 1/2. In terms of biological role, catalyzes the deamination of dCTP to dUTP. The sequence is that of dCTP deaminase from Campylobacter lari (strain RM2100 / D67 / ATCC BAA-1060).